The sequence spans 192 residues: MLLCILCILYFFTTVTQQCAPHSPSPWTKTTHVNNHHHHQTVENFYLDNRTIYHKIIEIEKRIERIEEKENNVLPEPSKPNNPVVNPPVSPIQPKTDPEQSENDCLSCPSLIPILDSCENCVSVKISPPFEYYSCKAVELKCGDGAKKLKISDGFQKNIHENNFKLICKNGSWMMMANHAEHKVETITCLTN.

The interval 71–100 is disordered; it reads NNVLPEPSKPNNPVVNPPVSPIQPKTDPEQ. The span at 77–91 shows a compositional bias: pro residues; sequence PSKPNNPVVNPPVSP.

This is an uncharacterized protein from Caenorhabditis elegans.